We begin with the raw amino-acid sequence, 330 residues long: Endo-1,4-beta-xylanase (330 aa).

Residues 2-330 (CSSIPSLREV…KPAFWRVVNI (329 aa)) form the GH10 domain. Catalysis depends on E133, which acts as the Proton donor. The active-site Nucleophile is E240.

Belongs to the glycosyl hydrolase 10 (cellulase F) family. Cytoplasmic xylanase subfamily.

The protein localises to the cytoplasm. It carries out the reaction Endohydrolysis of (1-&gt;4)-beta-D-xylosidic linkages in xylans.. It functions in the pathway glycan degradation; xylan degradation. This is Endo-1,4-beta-xylanase (xynA) from Geobacillus stearothermophilus (Bacillus stearothermophilus).